We begin with the raw amino-acid sequence, 358 residues long: Alanine racemase (358 aa).

Catalysis depends on Lys34, which acts as the Proton acceptor; specific for D-alanine. The residue at position 34 (Lys34) is an N6-(pyridoxal phosphate)lysine. Arg129 contributes to the substrate binding site. Tyr254 serves as the catalytic Proton acceptor; specific for L-alanine. Residue Met302 coordinates substrate.

Belongs to the alanine racemase family. The cofactor is pyridoxal 5'-phosphate.

It carries out the reaction L-alanine = D-alanine. The protein operates within amino-acid biosynthesis; D-alanine biosynthesis; D-alanine from L-alanine: step 1/1. In terms of biological role, catalyzes the interconversion of L-alanine and D-alanine. May also act on other amino acids. The chain is Alanine racemase (alr) from Vibrio parahaemolyticus serotype O3:K6 (strain RIMD 2210633).